Consider the following 393-residue polypeptide: Methylthioribose kinase (393 aa).

ATP contacts are provided by residues Asn-38, Lys-53, and 107 to 109 (EDL). Asp-225 contacts substrate. 242 to 244 (DPE) serves as a coordination point for ATP. Arg-332 contributes to the substrate binding site.

This sequence belongs to the methylthioribose kinase family. Homodimer.

The enzyme catalyses 5-(methylsulfanyl)-D-ribose + ATP = 5-(methylsulfanyl)-alpha-D-ribose 1-phosphate + ADP + H(+). It participates in amino-acid biosynthesis; L-methionine biosynthesis via salvage pathway; S-methyl-5-thio-alpha-D-ribose 1-phosphate from S-methyl-5'-thioadenosine (hydrolase route): step 2/2. Its function is as follows. Catalyzes the phosphorylation of methylthioribose into methylthioribose-1-phosphate. This chain is Methylthioribose kinase, found in Bacillus cereus (strain ZK / E33L).